Here is a 158-residue protein sequence, read N- to C-terminus: Protein EOLA2 (158 aa).

The ASCH domain maps to 6–92 (LSFRQPYAGF…IAGLVDIGET (87 aa)).

It belongs to the EOLA family.

This chain is Protein EOLA2, found in Homo sapiens (Human).